Here is a 287-residue protein sequence, read N- to C-terminus: Protease HtpX (287 aa).

Helical transmembrane passes span 4–24 and 33–53; these read IFLL…VMSI and GGLL…SLAI. A Zn(2+)-binding site is contributed by H139. The active site involves E140. Position 143 (H143) interacts with Zn(2+). 2 helical membrane passes run 154–174 and 195–215; these read LIQG…AGII and AVVF…VAYF. A Zn(2+)-binding site is contributed by E220.

The protein belongs to the peptidase M48B family. Zn(2+) serves as cofactor.

The protein resides in the cell inner membrane. The chain is Protease HtpX from Shewanella halifaxensis (strain HAW-EB4).